A 341-amino-acid polypeptide reads, in one-letter code: Type II methyltransferase M.NgoPII (341 aa).

An SAM-dependent MTase C5-type domain is found at 12–341; that stretch reads MKIISLFSGC…AAAIKKTLER (330 aa). Residue C84 is part of the active site.

This sequence belongs to the class I-like SAM-binding methyltransferase superfamily. C5-methyltransferase family.

The enzyme catalyses a 2'-deoxycytidine in DNA + S-adenosyl-L-methionine = a 5-methyl-2'-deoxycytidine in DNA + S-adenosyl-L-homocysteine + H(+). Its function is as follows. A methylase that recognizes the double-stranded sequence 5'-GGCC-3', methylates C-3 on both strands, and protects the DNA from cleavage by the NgoPII endonuclease. This Neisseria gonorrhoeae protein is Type II methyltransferase M.NgoPII (ngoPIIM).